Consider the following 337-residue polypeptide: Tetraacyldisaccharide 4'-kinase (337 aa).

His-51–Thr-58 contacts ATP.

Belongs to the LpxK family.

It catalyses the reaction a lipid A disaccharide + ATP = a lipid IVA + ADP + H(+). The protein operates within glycolipid biosynthesis; lipid IV(A) biosynthesis; lipid IV(A) from (3R)-3-hydroxytetradecanoyl-[acyl-carrier-protein] and UDP-N-acetyl-alpha-D-glucosamine: step 6/6. In terms of biological role, transfers the gamma-phosphate of ATP to the 4'-position of a tetraacyldisaccharide 1-phosphate intermediate (termed DS-1-P) to form tetraacyldisaccharide 1,4'-bis-phosphate (lipid IVA). The protein is Tetraacyldisaccharide 4'-kinase of Afipia carboxidovorans (strain ATCC 49405 / DSM 1227 / KCTC 32145 / OM5) (Oligotropha carboxidovorans).